A 128-amino-acid chain; its full sequence is L-ectoine synthase (128 aa).

This sequence belongs to the ectoine synthase family.

The catalysed reaction is (2S)-4-acetamido-2-aminobutanoate = L-ectoine + H2O. The protein operates within amine and polyamine biosynthesis; ectoine biosynthesis; L-ectoine from L-aspartate 4-semialdehyde: step 3/3. Catalyzes the circularization of gamma-N-acetyl-alpha,gamma-diaminobutyric acid (ADABA) to ectoine (1,4,5,6-tetrahydro-2-methyl-4-pyrimidine carboxylic acid), which is an excellent osmoprotectant. In Virgibacillus pantothenticus, this protein is L-ectoine synthase.